A 308-amino-acid polypeptide reads, in one-letter code: Taste receptor type 2 member 46 (308 aa).

Residue methionine 1 is a topological domain, extracellular. A helical transmembrane segment spans residues 2–22; sequence ITFLSITFSILVGVIFVIGNF. Residues 23–46 lie on the Cytoplasmic side of the membrane; that stretch reads ANGFIALVNSIEWVKRQKISFADQ. The chain crosses the membrane as a helical span at residues 47 to 67; it reads ILTGLAVSRVGLLWVLLLHLY. Topologically, residues 68-86 are extracellular; the sequence is ATEFNLAFYSVEVRITAYN. The chain crosses the membrane as a helical span at residues 87–107; that stretch reads VWIVTNHFSNWLSTSLSMFYL. At 108-126 the chain is on the cytoplasmic side; it reads LKIATFSNLIFLHLKRKVK. A helical transmembrane segment spans residues 127 to 147; that stretch reads SVILVTLLGPLLFLVCHLFVM. The Extracellular portion of the chain corresponds to 148 to 178; that stretch reads NMNHIVWRKEYEGNITWRIKLRSAMYLSNVT. Asparagine 161 and asparagine 176 each carry an N-linked (GlcNAc...) asparagine glycan. A helical transmembrane segment spans residues 179–199; it reads VTMLANLIPLTLTLMSFLLLI. Topologically, residues 200–229 are cytoplasmic; sequence CSLCKHLKKMQVHGKGSQDPSTKVHIKALQ. Residues 230–250 traverse the membrane as a helical segment; it reads TVTSFLLLCAIYFLSMILSVW. At 251–258 the chain is on the extracellular side; that stretch reads NFELEKKP. The chain crosses the membrane as a helical span at residues 259-279; the sequence is VFMFCQAVIFSYPSTHPLILI. At 280 to 308 the chain is on the cytoplasmic side; that stretch reads WGNKKLKQIFLSVLWNVRYWVKGQKPSSP.

It belongs to the G-protein coupled receptor T2R family.

The protein resides in the membrane. It localises to the cell projection. Its subcellular location is the cilium membrane. Functionally, receptor that may play a role in the perception of bitterness and is gustducin-linked. May play a role in sensing the chemical composition of the gastrointestinal content. The activity of this receptor may stimulate alpha gustducin, mediate PLC-beta-2 activation and lead to the gating of TRPM5. In airway epithelial cells, binding of bitter compounds increases the intracellular calcium ion concentration and stimulates ciliary beat frequency. The sequence is that of Taste receptor type 2 member 46 (TAS2R46) from Macaca mulatta (Rhesus macaque).